We begin with the raw amino-acid sequence, 205 residues long: Beta-crystallin B2 (205 aa).

Position 2 is an N-acetylalanine (Ala-2). An N-terminal arm region spans residues 2 to 16; it reads ASDHQSPATKQQQPS. Beta/gamma crystallin 'Greek key' domains lie at 17 to 56 and 57 to 101; these read SKIVLFEQENFQGRCHELSGPCTSLKEAGMEKIGSILVHS and GPWV…RPIK. Residues 102-106 are connecting peptide; it reads VDSQE. Beta/gamma crystallin 'Greek key' domains follow at residues 107–148 and 149–191; these read HKIV…RVQS and GTWV…RRIR. The tract at residues 193–205 is C-terminal arm; it reads MQWHQRGTFHPTN.

It belongs to the beta/gamma-crystallin family. In terms of assembly, homo/heterodimer, or complexes of higher-order. The structure of beta-crystallin oligomers seems to be stabilized through interactions between the N-terminal arms. Post-translationally, the N-terminus is blocked.

In terms of biological role, crystallins are the dominant structural components of the vertebrate eye lens. This Aquarana catesbeiana (American bullfrog) protein is Beta-crystallin B2.